We begin with the raw amino-acid sequence, 691 residues long: DNA ligase (691 aa).

NAD(+)-binding positions include 41-45 (DAEYD), 90-91 (SL), and Glu130. Lys132 functions as the N6-AMP-lysine intermediate in the catalytic mechanism. The NAD(+) site is built by Arg153, Glu190, Lys307, and Lys331. The Zn(2+) site is built by Cys425, Cys428, Cys443, and Cys449. Positions 610-691 (APQGVLAGKT…LHQLLEGNTQ (82 aa)) constitute a BRCT domain.

It belongs to the NAD-dependent DNA ligase family. LigA subfamily. It depends on Mg(2+) as a cofactor. Requires Mn(2+) as cofactor.

The enzyme catalyses NAD(+) + (deoxyribonucleotide)n-3'-hydroxyl + 5'-phospho-(deoxyribonucleotide)m = (deoxyribonucleotide)n+m + AMP + beta-nicotinamide D-nucleotide.. Its function is as follows. DNA ligase that catalyzes the formation of phosphodiester linkages between 5'-phosphoryl and 3'-hydroxyl groups in double-stranded DNA using NAD as a coenzyme and as the energy source for the reaction. It is essential for DNA replication and repair of damaged DNA. The chain is DNA ligase from Burkholderia vietnamiensis (strain G4 / LMG 22486) (Burkholderia cepacia (strain R1808)).